The sequence spans 376 residues: uncharacterized protein (376 aa).

Residues 1–280 (MPIPIIAHIA…RTPGFRRVVS (280 aa)) lie on the Lumenal side of the membrane. NADP(+)-binding residues include Ile-66, Asp-115, Arg-178, Lys-233, Val-270, and Thr-272. The Lowers pKa of active site Tyr role is filled by Lys-233. A helical membrane pass occupies residues 281–301 (FGKVWGLFLYLLLWPFWWLLL). Topologically, residues 302–376 (KGTIHGAQSF…KKKKIKKSKK (75 aa)) are cytoplasmic.

Belongs to the short-chain dehydrogenases/reductases (SDR) family.

It is found in the cytoplasm. The protein localises to the endoplasmic reticulum membrane. May be involved in lipid metabolism. This is an uncharacterized protein from Schizosaccharomyces pombe (strain 972 / ATCC 24843) (Fission yeast).